The primary structure comprises 217 residues: Large ribosomal subunit protein uL3 (217 aa).

Residues 131 to 155 (FSSSRASHGNSRSHNVPGSIGMAQD) are disordered. The segment covering 132-145 (SSSRASHGNSRSHN) has biased composition (low complexity). An N5-methylglutamine modification is found at glutamine 154.

This sequence belongs to the universal ribosomal protein uL3 family. In terms of assembly, part of the 50S ribosomal subunit. Forms a cluster with proteins L14 and L19. Post-translationally, methylated by PrmB.

One of the primary rRNA binding proteins, it binds directly near the 3'-end of the 23S rRNA, where it nucleates assembly of the 50S subunit. The chain is Large ribosomal subunit protein uL3 from Nitrosomonas eutropha (strain DSM 101675 / C91 / Nm57).